We begin with the raw amino-acid sequence, 476 residues long: RuvB-like helicase 2 (476 aa).

76–83 (GPPSTGKT) contacts ATP.

The protein belongs to the RuvB family. May form heterododecamers with RVB1. Component of the SWR1 chromatin remodeling complex, the INO80 chromatin remodeling complex, and of the R2TP complex.

The protein localises to the nucleus. The enzyme catalyses ATP + H2O = ADP + phosphate + H(+). DNA helicase which participates in several chromatin remodeling complexes, including the SWR1 and the INO80 complexes. The SWR1 complex mediates the ATP-dependent exchange of histone H2A for the H2A variant HZT1 leading to transcriptional regulation of selected genes by chromatin remodeling. The INO80 complex remodels chromatin by shifting nucleosomes and is involved in DNA repair. Also involved in pre-rRNA processing. The chain is RuvB-like helicase 2 (RVB2) from Candida glabrata (strain ATCC 2001 / BCRC 20586 / JCM 3761 / NBRC 0622 / NRRL Y-65 / CBS 138) (Yeast).